A 692-amino-acid polypeptide reads, in one-letter code: Methionine--tRNA ligase (692 aa).

The short motif at 12–22 (PYANGSFHIGH) is the 'HIGH' region element. C143, C146, C156, and C159 together coordinate Zn(2+). Positions 341–345 (KMSKS) match the 'KMSKS' region motif. K344 is a binding site for ATP. One can recognise a tRNA-binding domain in the interval 586 to 692 (DFAKIDLRIA…PGAQPGMRVR (107 aa)).

It belongs to the class-I aminoacyl-tRNA synthetase family. MetG type 1 subfamily. Homodimer. Requires Zn(2+) as cofactor.

Its subcellular location is the cytoplasm. It catalyses the reaction tRNA(Met) + L-methionine + ATP = L-methionyl-tRNA(Met) + AMP + diphosphate. Functionally, is required not only for elongation of protein synthesis but also for the initiation of all mRNA translation through initiator tRNA(fMet) aminoacylation. This chain is Methionine--tRNA ligase, found in Bordetella pertussis (strain Tohama I / ATCC BAA-589 / NCTC 13251).